A 94-amino-acid chain; its full sequence is Integration host factor subunit beta (94 aa).

This sequence belongs to the bacterial histone-like protein family. Heterodimer of an alpha and a beta chain.

In terms of biological role, this protein is one of the two subunits of integration host factor, a specific DNA-binding protein that functions in genetic recombination as well as in transcriptional and translational control. The polypeptide is Integration host factor subunit beta (Brucella melitensis biotype 2 (strain ATCC 23457)).